A 178-amino-acid chain; its full sequence is Bifunctional protein PyrR (178 aa).

The PRPP-binding motif lies at 99-111 (VVLVDDVIYTGRT).

The protein belongs to the purine/pyrimidine phosphoribosyltransferase family. PyrR subfamily. Homodimer and homohexamer; in equilibrium.

It carries out the reaction UMP + diphosphate = 5-phospho-alpha-D-ribose 1-diphosphate + uracil. Its function is as follows. Regulates transcriptional attenuation of the pyrimidine nucleotide (pyr) operon by binding in a uridine-dependent manner to specific sites on pyr mRNA. This disrupts an antiterminator hairpin in the RNA and favors formation of a downstream transcription terminator, leading to a reduced expression of downstream genes. Functionally, also displays a weak uracil phosphoribosyltransferase activity which is not physiologically significant. The polypeptide is Bifunctional protein PyrR (Thermoanaerobacter pseudethanolicus (strain ATCC 33223 / 39E) (Clostridium thermohydrosulfuricum)).